The chain runs to 261 residues: UPF0246 protein Reut_A1014 (261 aa).

The protein belongs to the UPF0246 family.

This Cupriavidus pinatubonensis (strain JMP 134 / LMG 1197) (Cupriavidus necator (strain JMP 134)) protein is UPF0246 protein Reut_A1014.